Here is a 398-residue protein sequence, read N- to C-terminus: MTMMMSDLPNDLVEEILSRVPITSLGAVRSTCKRWNGLSKDRIVCKGDANQQFTGFTRYVNESTVCSMRLDLNEIQNEDVELVELSINKINKFIELELFQVYYSDGLLLLVTDEVDSKIVVWNPYLGQTRLIQCRDTEHFKYRYALGYDNNRNHKILMYNRKNCEIYDFKSDSWKVLDIIPDLHTNIYVRDMSIKGNTYFFYRGEKIGEGLAGCLLSFDFTRERFVSCLPLPFQIAKFDDNVALSSVREEHLVVLFNNWEESEMEIWVTTKIEPNAVSWSNFLTFTHFRIKFLVTSFFIDQEKKLAVVFGRSLSKQMRCNIAYVIGDNGYLRILDFGVTFIPSNLPVSYAPSLVKITQGQELSVIEEKKRSRLLASLVYSTLFVSFIIFFSFISSVFI.

Positions 2 to 56 constitute an F-box domain; the sequence is TMMMSDLPNDLVEEILSRVPITSLGAVRSTCKRWNGLSKDRIVCKGDANQQFTGF.

The chain is Putative F-box protein At1g67450 from Arabidopsis thaliana (Mouse-ear cress).